An 834-amino-acid chain; its full sequence is Leucine--tRNA ligase (834 aa).

The 'HIGH' region signature appears at 40 to 50 (PYPSGNIHMGH). Positions 586–590 (KMSKS) match the 'KMSKS' region motif. ATP is bound at residue K589.

Belongs to the class-I aminoacyl-tRNA synthetase family.

The protein localises to the cytoplasm. It carries out the reaction tRNA(Leu) + L-leucine + ATP = L-leucyl-tRNA(Leu) + AMP + diphosphate. This Nitratidesulfovibrio vulgaris (strain DSM 19637 / Miyazaki F) (Desulfovibrio vulgaris) protein is Leucine--tRNA ligase.